The sequence spans 191 residues: Pyridoxal 5'-phosphate synthase subunit PdxT (191 aa).

46–48 contributes to the L-glutamine binding site; that stretch reads GES. Cys78 serves as the catalytic Nucleophile. Residues Arg105 and 134 to 135 each bind L-glutamine; that span reads IR. Active-site charge relay system residues include His170 and Glu172.

This sequence belongs to the glutaminase PdxT/SNO family. As to quaternary structure, in the presence of PdxS, forms a dodecamer of heterodimers. Only shows activity in the heterodimer.

It carries out the reaction aldehydo-D-ribose 5-phosphate + D-glyceraldehyde 3-phosphate + L-glutamine = pyridoxal 5'-phosphate + L-glutamate + phosphate + 3 H2O + H(+). The catalysed reaction is L-glutamine + H2O = L-glutamate + NH4(+). Its pathway is cofactor biosynthesis; pyridoxal 5'-phosphate biosynthesis. Its function is as follows. Catalyzes the hydrolysis of glutamine to glutamate and ammonia as part of the biosynthesis of pyridoxal 5'-phosphate. The resulting ammonia molecule is channeled to the active site of PdxS. This Carboxydothermus hydrogenoformans (strain ATCC BAA-161 / DSM 6008 / Z-2901) protein is Pyridoxal 5'-phosphate synthase subunit PdxT.